The following is a 338-amino-acid chain: Protein RecA (338 aa).

68–75 (GPESSGKT) contributes to the ATP binding site.

This sequence belongs to the RecA family.

It localises to the cytoplasm. Functionally, can catalyze the hydrolysis of ATP in the presence of single-stranded DNA, the ATP-dependent uptake of single-stranded DNA by duplex DNA, and the ATP-dependent hybridization of homologous single-stranded DNAs. It interacts with LexA causing its activation and leading to its autocatalytic cleavage. The chain is Protein RecA from Citrifermentans bemidjiense (strain ATCC BAA-1014 / DSM 16622 / JCM 12645 / Bem) (Geobacter bemidjiensis).